The following is a 229-amino-acid chain: 23 kDa piroplasm membrane protein (229 aa).

A signal peptide spans 1–19; sequence MNKYFKVFFFVLLTHALKS. The Extracellular portion of the chain corresponds to 20-203; it reads SLIFGQATLQ…EKEETSKKKY (184 aa). Residues 204 to 224 form a helical membrane-spanning segment; the sequence is VLMVVVVVVFVVVASLVVFLV. The Cytoplasmic portion of the chain corresponds to 225–229; the sequence is KFCLK.

The protein resides in the membrane. The polypeptide is 23 kDa piroplasm membrane protein (Theileria annulata).